A 255-amino-acid chain; its full sequence is 5'-nucleotidase SurE (255 aa).

4 residues coordinate a divalent metal cation: D8, D9, S40, and N93.

It belongs to the SurE nucleotidase family. Requires a divalent metal cation as cofactor.

It is found in the cytoplasm. The catalysed reaction is a ribonucleoside 5'-phosphate + H2O = a ribonucleoside + phosphate. Its function is as follows. Nucleotidase that shows phosphatase activity on nucleoside 5'-monophosphates. This Bradyrhizobium sp. (strain BTAi1 / ATCC BAA-1182) protein is 5'-nucleotidase SurE.